The primary structure comprises 356 residues: Holliday junction branch migration complex subunit RuvB (356 aa).

Residues Met1–Pro14 are compositionally biased toward polar residues. Positions Met1–Glu20 are disordered. Residues Leu13–Tyr201 are large ATPase domain (RuvB-L). ATP is bound by residues Leu40, Arg41, Gly82, Lys85, Thr86, Thr87, Arg191, Tyr201, and Arg238. Mg(2+) is bound at residue Thr86. The small ATPAse domain (RuvB-S) stretch occupies residues Asn202–Arg273. The tract at residues Gln276–Lys356 is head domain (RuvB-H). Residues Arg331 and Arg336 each contribute to the DNA site.

Belongs to the RuvB family. Homohexamer. Forms an RuvA(8)-RuvB(12)-Holliday junction (HJ) complex. HJ DNA is sandwiched between 2 RuvA tetramers; dsDNA enters through RuvA and exits via RuvB. An RuvB hexamer assembles on each DNA strand where it exits the tetramer. Each RuvB hexamer is contacted by two RuvA subunits (via domain III) on 2 adjacent RuvB subunits; this complex drives branch migration. In the full resolvosome a probable DNA-RuvA(4)-RuvB(12)-RuvC(2) complex forms which resolves the HJ.

It localises to the cytoplasm. It catalyses the reaction ATP + H2O = ADP + phosphate + H(+). Functionally, the RuvA-RuvB-RuvC complex processes Holliday junction (HJ) DNA during genetic recombination and DNA repair, while the RuvA-RuvB complex plays an important role in the rescue of blocked DNA replication forks via replication fork reversal (RFR). RuvA specifically binds to HJ cruciform DNA, conferring on it an open structure. The RuvB hexamer acts as an ATP-dependent pump, pulling dsDNA into and through the RuvAB complex. RuvB forms 2 homohexamers on either side of HJ DNA bound by 1 or 2 RuvA tetramers; 4 subunits per hexamer contact DNA at a time. Coordinated motions by a converter formed by DNA-disengaged RuvB subunits stimulates ATP hydrolysis and nucleotide exchange. Immobilization of the converter enables RuvB to convert the ATP-contained energy into a lever motion, pulling 2 nucleotides of DNA out of the RuvA tetramer per ATP hydrolyzed, thus driving DNA branch migration. The RuvB motors rotate together with the DNA substrate, which together with the progressing nucleotide cycle form the mechanistic basis for DNA recombination by continuous HJ branch migration. Branch migration allows RuvC to scan DNA until it finds its consensus sequence, where it cleaves and resolves cruciform DNA. The chain is Holliday junction branch migration complex subunit RuvB from Prochlorococcus marinus (strain NATL2A).